We begin with the raw amino-acid sequence, 314 residues long: tRNA dimethylallyltransferase (314 aa).

An ATP-binding site is contributed by 12–19; sequence GPTASGKT. 14-19 is a substrate binding site; it reads TASGKT. Interaction with substrate tRNA regions lie at residues 37-40, 161-165, 242-247, and 275-282; these read DSAL, QRINR, RCVGYR, and KRQITWLR.

This sequence belongs to the IPP transferase family. Monomer. The cofactor is Mg(2+).

The enzyme catalyses adenosine(37) in tRNA + dimethylallyl diphosphate = N(6)-dimethylallyladenosine(37) in tRNA + diphosphate. In terms of biological role, catalyzes the transfer of a dimethylallyl group onto the adenine at position 37 in tRNAs that read codons beginning with uridine, leading to the formation of N6-(dimethylallyl)adenosine (i(6)A). In Mannheimia succiniciproducens (strain KCTC 0769BP / MBEL55E), this protein is tRNA dimethylallyltransferase.